The following is a 207-amino-acid chain: 3-isopropylmalate dehydratase small subunit (207 aa).

The protein belongs to the LeuD family. LeuD type 1 subfamily. In terms of assembly, heterodimer of LeuC and LeuD.

The catalysed reaction is (2R,3S)-3-isopropylmalate = (2S)-2-isopropylmalate. Its pathway is amino-acid biosynthesis; L-leucine biosynthesis; L-leucine from 3-methyl-2-oxobutanoate: step 2/4. Catalyzes the isomerization between 2-isopropylmalate and 3-isopropylmalate, via the formation of 2-isopropylmaleate. In Gluconacetobacter diazotrophicus (strain ATCC 49037 / DSM 5601 / CCUG 37298 / CIP 103539 / LMG 7603 / PAl5), this protein is 3-isopropylmalate dehydratase small subunit.